The following is a 475-amino-acid chain: U3 small nucleolar RNA-interacting protein 2 (475 aa).

The tract at residues Met1–Ala75 is disordered. The Nuclear localization signal motif lies at Arg8 to Lys40. Omega-N-methylarginine is present on Arg10. N6-acetyllysine occurs at positions 12 and 25. Phosphoserine is present on residues Ser50, Ser51, Ser53, and Ser57. Positions Glu65 to Thr74 are enriched in acidic residues. A Glycyl lysine isopeptide (Lys-Gly) (interchain with G-Cter in SUMO2) cross-link involves residue Lys113. 7 WD repeats span residues Gly144–Val183, Gly197–Thr236, Gly239–Thr278, Gly281–Phe320, Gly322–Leu360, Glu374–Asp413, and Pro419–Cys460.

Belongs to the WD repeat RRP9 family. As to quaternary structure, interacts specifically with the U3 small nucleolar RNA (U3 snoRNA). Binds a sub-fragment of the U3 snoRNA surrounding the B/C motif (3UBC). This association with the U3BC RNA is dependent on the binding of a protein called 15.5K to the box B/C motif. The association of the protein with the U3BC RNA was found to be also dependent on a conserved RNA structure that flanks the box B/C motif. Part of the small subunit (SSU) processome, composed of more than 70 proteins and the RNA chaperone small nucleolar RNA (snoRNA) U3. In terms of processing, acetylation at Lys-12 and Lys-25 by KAT2B/PCAF under stress impairs pre-rRNA processing. Deacetylation by SIRT7 enhances RRP9-binding to U3 snoRNA, which is a prerequisite for pre-rRNA processing.

Its subcellular location is the nucleus. The protein resides in the nucleolus. In terms of biological role, component of a nucleolar small nuclear ribonucleoprotein particle (snoRNP) thought to participate in the processing and modification of pre-ribosomal RNA (pre-rRNA). Part of the small subunit (SSU) processome, first precursor of the small eukaryotic ribosomal subunit. During the assembly of the SSU processome in the nucleolus, many ribosome biogenesis factors, an RNA chaperone and ribosomal proteins associate with the nascent pre-rRNA and work in concert to generate RNA folding, modifications, rearrangements and cleavage as well as targeted degradation of pre-ribosomal RNA by the RNA exosome. The polypeptide is U3 small nucleolar RNA-interacting protein 2 (Homo sapiens (Human)).